The sequence spans 465 residues: tRNA-2-methylthio-N(6)-dimethylallyladenosine synthase (465 aa).

Residues 18 to 136 (RKLYIETYGC…LPNLVGAAEQ (119 aa)) enclose the MTTase N-terminal domain. [4Fe-4S] cluster-binding residues include C27, C63, C100, C174, C178, and C181. The Radical SAM core domain maps to 160 to 392 (GGVHINGFVS…IALQNRLSEE (233 aa)). A TRAM domain is found at 395–458 (KRDISKTFEV…SATLFGEVVE (64 aa)).

Belongs to the methylthiotransferase family. MiaB subfamily. Monomer. It depends on [4Fe-4S] cluster as a cofactor.

It localises to the cytoplasm. The enzyme catalyses N(6)-dimethylallyladenosine(37) in tRNA + (sulfur carrier)-SH + AH2 + 2 S-adenosyl-L-methionine = 2-methylsulfanyl-N(6)-dimethylallyladenosine(37) in tRNA + (sulfur carrier)-H + 5'-deoxyadenosine + L-methionine + A + S-adenosyl-L-homocysteine + 2 H(+). In terms of biological role, catalyzes the methylthiolation of N6-(dimethylallyl)adenosine (i(6)A), leading to the formation of 2-methylthio-N6-(dimethylallyl)adenosine (ms(2)i(6)A) at position 37 in tRNAs that read codons beginning with uridine. This Porphyromonas gingivalis (strain ATCC 33277 / DSM 20709 / CIP 103683 / JCM 12257 / NCTC 11834 / 2561) protein is tRNA-2-methylthio-N(6)-dimethylallyladenosine synthase.